The following is a 565-amino-acid chain: Dihydroxy-acid dehydratase (565 aa).

[2Fe-2S] cluster is bound at residue C50. D82 provides a ligand contact to Mg(2+). Position 123 (C123) interacts with [2Fe-2S] cluster. Residues D124 and K125 each coordinate Mg(2+). K125 is subject to N6-carboxylysine. Position 195 (C195) interacts with [2Fe-2S] cluster. E447 lines the Mg(2+) pocket. Residue S473 is the Proton acceptor of the active site.

The protein belongs to the IlvD/Edd family. In terms of assembly, homodimer. [2Fe-2S] cluster serves as cofactor. Requires Mg(2+) as cofactor.

The enzyme catalyses (2R)-2,3-dihydroxy-3-methylbutanoate = 3-methyl-2-oxobutanoate + H2O. It catalyses the reaction (2R,3R)-2,3-dihydroxy-3-methylpentanoate = (S)-3-methyl-2-oxopentanoate + H2O. The protein operates within amino-acid biosynthesis; L-isoleucine biosynthesis; L-isoleucine from 2-oxobutanoate: step 3/4. It participates in amino-acid biosynthesis; L-valine biosynthesis; L-valine from pyruvate: step 3/4. Its function is as follows. Functions in the biosynthesis of branched-chain amino acids. Catalyzes the dehydration of (2R,3R)-2,3-dihydroxy-3-methylpentanoate (2,3-dihydroxy-3-methylvalerate) into 2-oxo-3-methylpentanoate (2-oxo-3-methylvalerate) and of (2R)-2,3-dihydroxy-3-methylbutanoate (2,3-dihydroxyisovalerate) into 2-oxo-3-methylbutanoate (2-oxoisovalerate), the penultimate precursor to L-isoleucine and L-valine, respectively. This chain is Dihydroxy-acid dehydratase, found in Halorhodospira halophila (strain DSM 244 / SL1) (Ectothiorhodospira halophila (strain DSM 244 / SL1)).